A 69-amino-acid polypeptide reads, in one-letter code: Putative membrane protein insertion efficiency factor (69 aa).

This sequence belongs to the UPF0161 family.

It is found in the cell membrane. Its function is as follows. Could be involved in insertion of integral membrane proteins into the membrane. This is Putative membrane protein insertion efficiency factor from Alkaliphilus oremlandii (strain OhILAs) (Clostridium oremlandii (strain OhILAs)).